We begin with the raw amino-acid sequence, 419 residues long: Copalyl diphosphate synthase 2, chloroplastic (419 aa).

K82 serves as a coordination point for substrate.

The protein belongs to the terpene synthase family. Tpsc subfamily. The cofactor is Mg(2+). As to expression, ubiquitous expression in roots, stems, leaves and flowers.

It is found in the plastid. The protein localises to the chloroplast. It carries out the reaction (2E,6E,10E)-geranylgeranyl diphosphate = (+)-copalyl diphosphate. It functions in the pathway secondary metabolite biosynthesis; terpenoid biosynthesis. In terms of biological role, involved in the biosynthesis of ent-kaurene diterpenoids natural products such as oridonin, miltiradiene, eriocalyxin B and nezukol, known to exhibit antitumor, anti-inflammatory and antibacterial activities. Catalyzes the conversion of (2E,6E,10E)-geranylgeranyl diphosphate (GGPP) to (+)-copalyl diphosphate ((+)-CPP). The sequence is that of Copalyl diphosphate synthase 2, chloroplastic from Isodon rubescens (Rabdosia rubescens).